A 677-amino-acid chain; its full sequence is Sulfate transporter 2.1 (677 aa).

Over 1 to 118 (MKERDSESFE…NYKLTMFKND (118 aa)) the chain is Cytoplasmic. The disordered stretch occupies residues 23–54 (STHMIQMAMANSGSSAAAQAGQDQPDRSKWLL). Low complexity predominate over residues 28 to 44 (QMAMANSGSSAAAQAGQ). A helical membrane pass occupies residues 119–139 (LMAGLTLASLCIPQSIGYATL). Topologically, residues 140–141 (AK) are extracellular. Residues 142–162 (LDPQYGLYTSVVPPLIYALMG) form a helical membrane-spanning segment. The Cytoplasmic portion of the chain corresponds to 163 to 166 (TSRE). A helical transmembrane segment spans residues 167-187 (IAIGPVAVVSLLISSMLQKLI). Over 188 to 198 (DPETDPLGYKK) the chain is Extracellular. A helical transmembrane segment spans residues 199 to 219 (LVLTTTFFAGIFQASFGLFRL). At 220-221 (GF) the chain is on the cytoplasmic side. A helical transmembrane segment spans residues 222 to 242 (LVDFLSHAAIVGFMGGAAIVI). Over 243 to 278 (GLQQLKGLLGITNFTTNTDIVSVLRAVWRSCQQQWS) the chain is Extracellular. Asn255 carries an N-linked (GlcNAc...) asparagine glycan. The helical transmembrane segment at 279–299 (PHTFILGCSFLSFILITRFIG) threads the bilayer. At 300 to 304 (KKYKK) the chain is on the cytoplasmic side. Residues 305 to 325 (LFWLPAIAPLIAVVVSTLMVF) traverse the membrane as a helical segment. Over 326 to 360 (LTKADEHGVKTVRHIKGGLNPMSIQDLDFNTPHLG) the chain is Extracellular. The chain crosses the membrane as a helical span at residues 361–381 (QIAKIGLIIAIVALTEAIAVG). Residues 382–397 (RSFAGIKGYRLDGNKE) lie on the Cytoplasmic side of the membrane. Residues 398-418 (MVAIGFMNVLGSFTSCYAATG) form a helical membrane-spanning segment. At 419–426 (SFSRTAVN) the chain is on the extracellular side. The helical transmembrane segment at 427–447 (FAAGCETAMSNIVMAVTVFVA) threads the bilayer. The Cytoplasmic portion of the chain corresponds to 448-454 (LECLTRL). The helical transmembrane segment at 455-475 (LYYTPIAILASIILSALPGLI) threads the bilayer. Residues 476-490 (NINEAIHIWKVDKFD) lie on the Extracellular side of the membrane. Residues 491 to 511 (FLALIGAFFGVLFASVEIGLL) traverse the membrane as a helical segment. The Cytoplasmic portion of the chain corresponds to 512-677 (VAVVISFAKI…ALDACFGLKV (166 aa)). In terms of domain architecture, STAS spans 548–672 (YPMTVKTPGV…LTIGEALDAC (125 aa)).

This sequence belongs to the SLC26A/SulP transporter (TC 2.A.53) family. In terms of tissue distribution, expressed in root cap, central cylinder of roots and in vascular tissues of leaves.

The protein resides in the membrane. In terms of biological role, low-affinity H(+)/sulfate cotransporter that may be involved in root-to-shoot translocation of sulfate. Plays a central role in the regulation of sulfate assimilation. This chain is Sulfate transporter 2.1 (SULTR2;1), found in Arabidopsis thaliana (Mouse-ear cress).